A 535-amino-acid chain; its full sequence is Dual specificity calcium/calmodulin-dependent 3',5'-cyclic nucleotide phosphodiesterase 1B (535 aa).

The interval 1–21 (MELSPRSPPEMLESDCPSPLE) is disordered. Serine 7 and serine 14 each carry phosphoserine. Calmodulin-binding stretches follow at residues 27-47 (SKKMWIKLRSLLRYMVKQLEN) and 117-140 (EKPKFRSIVHAVQAGIFVERMFRR). Residues 145–502 (VGPTYSTAVH…QKWKERAASG (358 aa)) enclose the PDEase domain. Histidine 222 (proton donor) is an active-site residue. 4 residues coordinate Zn(2+): histidine 226, histidine 262, aspartate 263, and aspartate 369. Position 263 (aspartate 263) interacts with Mg(2+). Disordered stretches follow at residues 444–474 (QPLADDDSKPKSQPSFQWRQPSLDVDVGDPN) and 495–535 (WKER…GNLD). Positions 454–463 (KSQPSFQWRQ) are enriched in polar residues. Residues serine 465 and serine 513 each carry the phosphoserine modification.

The protein belongs to the cyclic nucleotide phosphodiesterase family. PDE1 subfamily. As to quaternary structure, homodimer. It depends on Zn(2+) as a cofactor. The cofactor is Mg(2+).

The protein localises to the cytoplasm. Its subcellular location is the cytosol. The catalysed reaction is a nucleoside 3',5'-cyclic phosphate + H2O = a nucleoside 5'-phosphate + H(+). It carries out the reaction 3',5'-cyclic GMP + H2O = GMP + H(+). The enzyme catalyses 3',5'-cyclic AMP + H2O = AMP + H(+). Its activity is regulated as follows. Type I PDE are activated by the binding of calmodulin in the presence of Ca(2+). In terms of biological role, cyclic nucleotide phosphodiesterase with a dual specificity for the second messengers cAMP and cGMP, which are key regulators of many important physiological processes. Has a preference for cGMP as a substrate. The protein is Dual specificity calcium/calmodulin-dependent 3',5'-cyclic nucleotide phosphodiesterase 1B of Mus musculus (Mouse).